The chain runs to 57 residues: MITPIGKNSNSNSNSNSNSNSNSNSNSNSNSNSNSNSNSNSNSNSNSNSNSNSNSNN.

The disordered stretch occupies residues 1 to 57; that stretch reads MITPIGKNSNSNSNSNSNSNSNSNSNSNSNSNSNSNSNSNSNSNSNSNSNSNSNSNN. The segment covering 8 to 57 has biased composition (low complexity); sequence NSNSNSNSNSNSNSNSNSNSNSNSNSNSNSNSNSNSNSNSNSNSNSNSNN.

This is an uncharacterized protein from Dictyostelium discoideum (Social amoeba).